The sequence spans 236 residues: LHFPL tetraspan subfamily member 3 protein (236 aa).

Helical transmembrane passes span 36–56, 110–130, 140–160, and 191–211; these read IGVLWAIFTICFAIVNVVCFI, FFIGLSMMLIIACIICFTLFF, ICAWMQLTSAACLVLGCMIFP, and ILAIIGILDALILSFLAFVLG.

It belongs to the LHFP family.

The protein localises to the membrane. This is LHFPL tetraspan subfamily member 3 protein from Homo sapiens (Human).